The sequence spans 949 residues: MSINHEIYYILVFEHRSVAIKLIIVVIVLLQFFLARSRQIDRTWAHTNRKERFREMTAIGNTDDALDTSTAASKENGKGRLRVQKACELCKKRKVKCDGNNPCLNCSKHQKECRYDFKATNRKRRRRQVASAVRDVSKTYAETSESFPRDLLSKSNIIINAPSDGVSSSASNSPNPNSHYHHISSTLPFMSGRPNHTFHSGSNLNGENNNNSFPEDHMAKLLLQLSSKLGNTTKESSIRTTRTNASDVNANPTVVNMKNSQEDCDTNHRSAICDSAEALHNNNINSKENKIINSQITNTVNDHFESPWQTFSLDKYRFHRRYQNILPYYLGVSILKDLSPQTIEYAKLKRPRVQNYGWNLSGGHYLKYKGDFRSQEKNIRHESKFFDFDDPVHLSLINKLLRYYFDEINPVFSIIHEATFWQQYNNKFLRQGKQNNSSANLFTSMLYLILSTTLRFREGHLDGQKGQGTYSNTSLNITFEEKSILIKKPSIEENLFKYAYLIINTLTFEWESFELIQSWLLITFYFRTCYRQTACWNALSQAVNMCNGMSLYLNKFPEIHSTYDESKAWHCFWCCFIMDKLISFQMGRFYQLSLPASEMCEQMNLVKSKKFLQEEDDWFHEETFQMLDLSIIVTQFLKRDAQDLNLNETVQLRSQLGQWYDTFIVGSQTNAYDDNYRYFYQVQPFMTYLDIRLTFEVRQLFCLIAPSSTANNKSLEYVVDTELLISHCQMAIENLAEITRSNLFFVPWWLNLSQLFTVNLICIIYLHAGIAVTQNKAIMQSCQEIWRTLECSKPKNRPSMLPECLWCLKMLNHMFCIRLRDSALQLEATLGTDHGDDTPNRNKFEQFKKVGDNDADVEVDAGEREENADERQENPHNNSKRVPLATRSHNTTNFDGSIAISPESAVANLGTDTGLPSDVLDTVSKIGNSPNVFDDDLFSNLLWFDQNFA.

The zn(2)-C6 fungal-type DNA-binding region spans 87 to 113 (CELCKKRKVKCDGNNPCLNCSKHQKEC). 2 stretches are compositionally biased toward low complexity: residues 164–178 (DGVS…NPNS) and 200–212 (SGSN…NNNS). Disordered regions lie at residues 164-214 (DGVS…NSFP) and 862-888 (GERE…ATRS). Basic and acidic residues predominate over residues 862–874 (GEREENADERQEN).

It localises to the nucleus. Functionally, binds to SIN3. In Saccharomyces cerevisiae (strain ATCC 204508 / S288c) (Baker's yeast), this protein is Probable transcriptional regulatory protein STB4 (STB4).